The primary structure comprises 234 residues: Phosphoribosylaminoimidazole-succinocarboxamide synthase (234 aa).

Belongs to the SAICAR synthetase family.

The enzyme catalyses 5-amino-1-(5-phospho-D-ribosyl)imidazole-4-carboxylate + L-aspartate + ATP = (2S)-2-[5-amino-1-(5-phospho-beta-D-ribosyl)imidazole-4-carboxamido]succinate + ADP + phosphate + 2 H(+). It participates in purine metabolism; IMP biosynthesis via de novo pathway; 5-amino-1-(5-phospho-D-ribosyl)imidazole-4-carboxamide from 5-amino-1-(5-phospho-D-ribosyl)imidazole-4-carboxylate: step 1/2. The polypeptide is Phosphoribosylaminoimidazole-succinocarboxamide synthase (Clostridium botulinum (strain ATCC 19397 / Type A)).